The primary structure comprises 101 residues: Small ribosomal subunit protein uS14 (101 aa).

Belongs to the universal ribosomal protein uS14 family. Part of the 30S ribosomal subunit. Contacts proteins S3 and S10.

Its function is as follows. Binds 16S rRNA, required for the assembly of 30S particles and may also be responsible for determining the conformation of the 16S rRNA at the A site. The chain is Small ribosomal subunit protein uS14 from Corynebacterium efficiens (strain DSM 44549 / YS-314 / AJ 12310 / JCM 11189 / NBRC 100395).